The following is an 802-amino-acid chain: Phenylalanine--tRNA ligase beta subunit (802 aa).

The region spanning 40–155 is the tRNA-binding domain; that stretch reads SASLKNVVVG…EHVETGVSAI (116 aa). The B5 domain occupies 409–484; the sequence is KAVNKIETSL…RIYGYDEIPV (76 aa). Residues D462, D468, E471, and E472 each contribute to the Mg(2+) site. In terms of domain architecture, FDX-ACB spans 709–802; the sequence is PRYPEMTRDL…LQAKLHAIIR (94 aa).

It belongs to the phenylalanyl-tRNA synthetase beta subunit family. Type 1 subfamily. As to quaternary structure, tetramer of two alpha and two beta subunits. The cofactor is Mg(2+).

It is found in the cytoplasm. It carries out the reaction tRNA(Phe) + L-phenylalanine + ATP = L-phenylalanyl-tRNA(Phe) + AMP + diphosphate + H(+). This chain is Phenylalanine--tRNA ligase beta subunit, found in Listeria innocua serovar 6a (strain ATCC BAA-680 / CLIP 11262).